Here is a 547-residue protein sequence, read N- to C-terminus: MAKIVKFGDEARQKMLAGVNVLADAVKTTLGPKGRNVVLDKSFGAPTVTKDGVSVAKEIELEDKFENMGAQMVKEVASKASDDAGDGTTTATVLAQAIVNEGLKSVAAGMNPMDLKRGIDKAVNAAVAHIKSIAQPCEDGKSIAQVGTISANSDSHVGDIIAEAMAKVGKEGVITVEEGSGLENELDVVEGMQFDRGYLSPYFINNQESMSVEIEQPYILLVDKKISNIRELLPVLEAVAKSGKPLVIVAEDVEGEALATLVVNNMRGIVKVTACKAPGFGDRRKAMLQDIAILTGGTVISEEVGLDLESATLEHLGSAKRVTMTKENSTIVDGAGVAADIESRVAQIRAQIEETSSDYDREKLQERVAKLAGGVAVIKVGAMTEVEMKEKKARVEDALHATRAAVEEGVVPGGGTALIRAAAAIADLKGDNEDQNAGIGIAIRALEAPLRQIVSNAGGEASVVADKVKNGEGNFGFNAASGEYGDMLEFGILDPAKVSRTAIQAAGSIAGLMITTEAMIADKPSEGGAAAPDMGGMGGMGGMGGMM.

Residues 29 to 32 (TLGP), lysine 50, 86 to 90 (DGTTT), glycine 414, 478 to 480 (NAA), and aspartate 494 contribute to the ATP site.

It belongs to the chaperonin (HSP60) family. In terms of assembly, forms a cylinder of 14 subunits composed of two heptameric rings stacked back-to-back. Interacts with the co-chaperonin GroES.

Its subcellular location is the cytoplasm. The enzyme catalyses ATP + H2O + a folded polypeptide = ADP + phosphate + an unfolded polypeptide.. Its function is as follows. Together with its co-chaperonin GroES, plays an essential role in assisting protein folding. The GroEL-GroES system forms a nano-cage that allows encapsulation of the non-native substrate proteins and provides a physical environment optimized to promote and accelerate protein folding. This is Chaperonin GroEL from Saccharophagus degradans (strain 2-40 / ATCC 43961 / DSM 17024).